The chain runs to 138 residues: Ig heavy chain V region TEPC 1017 (138 aa).

Residues 1–20 form the signal peptide; the sequence is MGWSYIILFLVATATDVHSQ. The framework-1 stretch occupies residues 21–49; that stretch reads VQLQQPGAELVKPGASVQLSCKASGHTFT. Cysteine 41 and cysteine 115 are oxidised to a cystine. Residues 50 to 54 are complementarity-determining-1; the sequence is NYWIH. The framework-2 stretch occupies residues 55–68; the sequence is WVKQRPGQGLEWIG. A complementarity-determining-2 region spans residues 69 to 85; that stretch reads EINPNDGRSNYNEKFKN. Positions 86–117 are framework-3; that stretch reads KATLTVDKSSSTAYMQLSSLTPEEFAVYYCAR. The tract at residues 118 to 127 is complementarity-determining-3; it reads SDGYYDWFVY. Residues 128–138 form a framework-4 region; that stretch reads WGQGTLVTFSA.

The chain is Ig heavy chain V region TEPC 1017 from Mus musculus (Mouse).